The primary structure comprises 99 residues: Aspartyl/glutamyl-tRNA(Asn/Gln) amidotransferase subunit C (99 aa).

This sequence belongs to the GatC family. Heterotrimer of A, B and C subunits.

The enzyme catalyses L-glutamyl-tRNA(Gln) + L-glutamine + ATP + H2O = L-glutaminyl-tRNA(Gln) + L-glutamate + ADP + phosphate + H(+). It carries out the reaction L-aspartyl-tRNA(Asn) + L-glutamine + ATP + H2O = L-asparaginyl-tRNA(Asn) + L-glutamate + ADP + phosphate + 2 H(+). Its function is as follows. Allows the formation of correctly charged Asn-tRNA(Asn) or Gln-tRNA(Gln) through the transamidation of misacylated Asp-tRNA(Asn) or Glu-tRNA(Gln) in organisms which lack either or both of asparaginyl-tRNA or glutaminyl-tRNA synthetases. The reaction takes place in the presence of glutamine and ATP through an activated phospho-Asp-tRNA(Asn) or phospho-Glu-tRNA(Gln). The protein is Aspartyl/glutamyl-tRNA(Asn/Gln) amidotransferase subunit C of Delftia acidovorans (strain DSM 14801 / SPH-1).